We begin with the raw amino-acid sequence, 262 residues long: Thiazole synthase (262 aa).

Residue lysine 97 is the Schiff-base intermediate with DXP of the active site. 1-deoxy-D-xylulose 5-phosphate is bound by residues glycine 158, 185–186 (AG), and 207–208 (NT). Residues 243–262 (DKAQASTPTVGQPFWHSAEY) form a disordered region.

Belongs to the ThiG family. Homotetramer. Forms heterodimers with either ThiH or ThiS.

It localises to the cytoplasm. The enzyme catalyses [ThiS sulfur-carrier protein]-C-terminal-Gly-aminoethanethioate + 2-iminoacetate + 1-deoxy-D-xylulose 5-phosphate = [ThiS sulfur-carrier protein]-C-terminal Gly-Gly + 2-[(2R,5Z)-2-carboxy-4-methylthiazol-5(2H)-ylidene]ethyl phosphate + 2 H2O + H(+). Its pathway is cofactor biosynthesis; thiamine diphosphate biosynthesis. Its function is as follows. Catalyzes the rearrangement of 1-deoxy-D-xylulose 5-phosphate (DXP) to produce the thiazole phosphate moiety of thiamine. Sulfur is provided by the thiocarboxylate moiety of the carrier protein ThiS. In vitro, sulfur can be provided by H(2)S. In Neisseria meningitidis serogroup B (strain ATCC BAA-335 / MC58), this protein is Thiazole synthase.